A 1756-amino-acid chain; its full sequence is Protein TIC 214 (1756 aa).

6 helical membrane-spanning segments follow: residues 18–38 (VSGP…LPFG), 54–74 (GYGI…FLSM), 79–99 (IYAA…YMFF), 128–148 (LFMD…NPVL), 163–183 (ISFM…LTIF), and 210–230 (FSLL…LPFL). The interval 1469-1504 (KNKQVEDGQDKNGQVEDQDGQDQDGQVEDQQTDGKK) is disordered. Residues 1471–1482 (KQVEDGQDKNGQ) show a composition bias toward basic and acidic residues. Over residues 1484 to 1499 (EDQDGQDQDGQVEDQQ) the composition is skewed to acidic residues.

Belongs to the TIC214 family. As to quaternary structure, part of the Tic complex.

The protein localises to the plastid. Its subcellular location is the chloroplast inner membrane. Its function is as follows. Involved in protein precursor import into chloroplasts. May be part of an intermediate translocation complex acting as a protein-conducting channel at the inner envelope. In Pinus thunbergii (Japanese black pine), this protein is Protein TIC 214.